The chain runs to 378 residues: 5-amino-6-(D-ribitylamino)uracil--L-tyrosine 4-hydroxyphenyl transferase (378 aa).

The Radical SAM core domain maps to 59 to 306; it reads VTYVINRNIN…TAVARIYLGN (248 aa). [4Fe-4S] cluster-binding residues include Cys73, Cys77, and Cys80.

This sequence belongs to the radical SAM superfamily. CofH family. As to quaternary structure, consists of two subunits, CofG and CofH. [4Fe-4S] cluster serves as cofactor.

It carries out the reaction 5-amino-6-(D-ribitylamino)uracil + L-tyrosine + S-adenosyl-L-methionine = 5-amino-5-(4-hydroxybenzyl)-6-(D-ribitylimino)-5,6-dihydrouracil + 2-iminoacetate + 5'-deoxyadenosine + L-methionine + H(+). The protein operates within cofactor biosynthesis; coenzyme F0 biosynthesis. Its function is as follows. Catalyzes the radical-mediated synthesis of 5-amino-5-(4-hydroxybenzyl)-6-(D-ribitylimino)-5,6-dihydrouracil from 5-amino-6-(D-ribitylamino)uracil and L-tyrosine. This is 5-amino-6-(D-ribitylamino)uracil--L-tyrosine 4-hydroxyphenyl transferase from Microcystis aeruginosa (strain NIES-843 / IAM M-2473).